Reading from the N-terminus, the 340-residue chain is Phosphoribosylformylglycinamidine cyclo-ligase (340 aa).

The protein belongs to the AIR synthase family.

It is found in the cytoplasm. The enzyme catalyses 2-formamido-N(1)-(5-O-phospho-beta-D-ribosyl)acetamidine + ATP = 5-amino-1-(5-phospho-beta-D-ribosyl)imidazole + ADP + phosphate + H(+). The protein operates within purine metabolism; IMP biosynthesis via de novo pathway; 5-amino-1-(5-phospho-D-ribosyl)imidazole from N(2)-formyl-N(1)-(5-phospho-D-ribosyl)glycinamide: step 2/2. The chain is Phosphoribosylformylglycinamidine cyclo-ligase from Streptococcus agalactiae serotype Ia (strain ATCC 27591 / A909 / CDC SS700).